Reading from the N-terminus, the 397-residue chain is 8-amino-7-oxononanoate synthase (397 aa).

Arg-24 lines the substrate pocket. 110-111 (GY) contacts pyridoxal 5'-phosphate. Residue His-135 coordinates substrate. The pyridoxal 5'-phosphate site is built by Ser-183, His-211, and Thr-240. At Lys-243 the chain carries N6-(pyridoxal phosphate)lysine. Residue Thr-357 participates in substrate binding.

Belongs to the class-II pyridoxal-phosphate-dependent aminotransferase family. BioF subfamily. As to quaternary structure, homodimer. Pyridoxal 5'-phosphate is required as a cofactor.

It carries out the reaction 6-carboxyhexanoyl-[ACP] + L-alanine + H(+) = (8S)-8-amino-7-oxononanoate + holo-[ACP] + CO2. It functions in the pathway cofactor biosynthesis; biotin biosynthesis. Its function is as follows. Catalyzes the decarboxylative condensation of pimeloyl-[acyl-carrier protein] and L-alanine to produce 8-amino-7-oxononanoate (AON), [acyl-carrier protein], and carbon dioxide. The protein is 8-amino-7-oxononanoate synthase of Hydrogenovibrio crunogenus (strain DSM 25203 / XCL-2) (Thiomicrospira crunogena).